Reading from the N-terminus, the 486-residue chain is UDP-N-acetylmuramate--L-alanine ligase (486 aa).

129–135 (GTHGKTT) contributes to the ATP binding site.

It belongs to the MurCDEF family.

It is found in the cytoplasm. The enzyme catalyses UDP-N-acetyl-alpha-D-muramate + L-alanine + ATP = UDP-N-acetyl-alpha-D-muramoyl-L-alanine + ADP + phosphate + H(+). It participates in cell wall biogenesis; peptidoglycan biosynthesis. Its function is as follows. Cell wall formation. This Vibrio cholerae serotype O1 (strain ATCC 39541 / Classical Ogawa 395 / O395) protein is UDP-N-acetylmuramate--L-alanine ligase.